Here is a 420-residue protein sequence, read N- to C-terminus: ATP phosphoribosyltransferase regulatory subunit (420 aa).

The protein belongs to the class-II aminoacyl-tRNA synthetase family. HisZ subfamily. In terms of assembly, heteromultimer composed of HisG and HisZ subunits.

The protein resides in the cytoplasm. It functions in the pathway amino-acid biosynthesis; L-histidine biosynthesis; L-histidine from 5-phospho-alpha-D-ribose 1-diphosphate: step 1/9. Its function is as follows. Required for the first step of histidine biosynthesis. May allow the feedback regulation of ATP phosphoribosyltransferase activity by histidine. The sequence is that of ATP phosphoribosyltransferase regulatory subunit from Bacillus mycoides (strain KBAB4) (Bacillus weihenstephanensis).